Here is a 392-residue protein sequence, read N- to C-terminus: MPILKMSELDLAGKRVLIREDLNVPLKNGEITDDTRIRASLPSIQQAMQAGAKVMVMSHLGRPTEGEFDAAFSLAPVAGYLSHLLGQEVRLAPDWLEGMAVEKGQLVLCENVRFNRGEKKNDEALAKKMAALCDIYVMDAFGSAHRAQASTHGVAKYAPVACAGPLLAGELEALGKALENPARPLVAIVGGSKVSTKLTVLESLSQVVDQLIVGGGIANTFIAAADYNVGKSLYEADLVGTAKQLRTAAQEGGGDIPLPVDVVCGQEFSENAEAVLKRIGKVTDEDMIFDIGPETSKHFAEILKGAGTIVWNGPVGVFEFDQFGEGTKALALAIAESPAFSIAGGGDTLAAVAKYGVGDQVSYISTGGGAFLEFLEGKQLPAVAILEERASQ.

Residues 21-23, arginine 36, 59-62, arginine 113, and arginine 146 contribute to the substrate site; these read DLN and HLGR. ATP contacts are provided by residues lysine 197, glutamate 319, and 345–348; that span reads GGDT.

Belongs to the phosphoglycerate kinase family. As to quaternary structure, monomer.

Its subcellular location is the cytoplasm. It carries out the reaction (2R)-3-phosphoglycerate + ATP = (2R)-3-phospho-glyceroyl phosphate + ADP. It participates in carbohydrate degradation; glycolysis; pyruvate from D-glyceraldehyde 3-phosphate: step 2/5. This chain is Phosphoglycerate kinase, found in Nitrosococcus oceani (strain ATCC 19707 / BCRC 17464 / JCM 30415 / NCIMB 11848 / C-107).